Reading from the N-terminus, the 630-residue chain is Telomere repeat-binding protein 5 (630 aa).

3 disordered regions span residues 1–38, 56–78, and 308–327; these read MVLQKRPDYGFNGYEVPHTPRAARSPRKSAFKKKSENH, EGGNSSSSSNNTSGNNEDQCAVK, and YTASQSEETNKNEGQSGSPR. Residues 57–71 are compositionally biased toward low complexity; it reads GGNSSSSSNNTSGNN. Residues 309–325 show a composition bias toward polar residues; the sequence is TASQSEETNKNEGQSGS. Residues 354 to 433 enclose the Ubiquitin-like domain; that stretch reads VKLGIKSFRV…SDTLGFCLEP (80 aa). The segment at 463 to 489 is disordered; that stretch reads LPSPGKHAKPSNSVESDLDSKPSAPNR. The region spanning 523–582 is the HTH myb-type domain; the sequence is AQRRIRRPFSVAEVEALVQAVERLGTGRWRDVKLRAFDNAKHRTYVDLKDKWKTLVHTAR. Residues 551-578 constitute a DNA-binding region (H-T-H motif); sequence WRDVKLRAFDNAKHRTYVDLKDKWKTLV.

In terms of assembly, homodimer. Expressed ubiquitously.

It is found in the nucleus. Functionally, binds specifically to the plant telomeric double-stranded DNA sequences. At least 6 repeats of telomeric sequences are required for binding. This Arabidopsis thaliana (Mouse-ear cress) protein is Telomere repeat-binding protein 5 (TRP5).